Reading from the N-terminus, the 48-residue chain is Bacteriocin plantaricin-A (48 aa).

Positions 1–25 (MKIQIKGMKQLSNKEMQKIVGGKSS) are excised as a propeptide.

In terms of assembly, active plantaricin A is composed of an alpha chain and a beta chain.

Functionally, this heat stable bacteriocin inhibits the growth of closely related Lactobacillus species. It may act as a pore-forming protein, creating a channel in the cell membrane through a 'barrel stave' mechanism. This chain is Bacteriocin plantaricin-A (plnA), found in Lactiplantibacillus plantarum (strain ATCC BAA-793 / NCIMB 8826 / WCFS1) (Lactobacillus plantarum).